The sequence spans 62 residues: UPF0337 protein mll8179 (62 aa).

The disordered stretch occupies residues 1 to 42 (MRNMVNKDQVAGLAKQLKGSVKQAAGKATGNRRTQAEGMADK).

It belongs to the UPF0337 (CsbD) family.

The polypeptide is UPF0337 protein mll8179 (Mesorhizobium japonicum (strain LMG 29417 / CECT 9101 / MAFF 303099) (Mesorhizobium loti (strain MAFF 303099))).